The chain runs to 678 residues: Penicillin-binding protein activator LpoA (678 aa).

The signal sequence occupies residues 1 to 26 (MVPSTFSRLKAARCLPVVLAALIFAG). The N-palmitoyl cysteine moiety is linked to residue C27. The S-diacylglycerol cysteine moiety is linked to residue C27. Composition is skewed to low complexity over residues 300-310 (AADVAEQPQPQ), 330-340 (QPAAQPVPVSA), and 513-528 (TTNNPTLQTTPTDDQF). 2 disordered regions span residues 300 to 340 (AADV…PVSA) and 496 to 528 (ALTGSPITPRATTDSGMTTNNPTLQTTPTDDQF).

This sequence belongs to the LpoA family. As to quaternary structure, interacts with PBP1a.

It localises to the cell outer membrane. Regulator of peptidoglycan synthesis that is essential for the function of penicillin-binding protein 1A (PBP1a). This Shigella flexneri serotype 5b (strain 8401) protein is Penicillin-binding protein activator LpoA.